A 527-amino-acid chain; its full sequence is Cyclin-L1 (527 aa).

Residues 1–37 (MASGPHPTSTAAAASASSAAPSAGGSSSGTTTTTTTT) are disordered. 2 cyclin-like regions span residues 89–191 (ELIQ…RVLK) and 204–288 (KIIV…ETLR). Position 326 is a phosphothreonine (Thr-326). The interval 327–527 (PALSTLGGFS…SRSGHGRHRR (201 aa)) is disordered. Ser-336 and Ser-339 each carry phosphoserine. Residues Lys-340 and Lys-348 each participate in a glycyl lysine isopeptide (Lys-Gly) (interchain with G-Cter in SUMO2) cross-link. Basic and acidic residues predominate over residues 343–353 (SPREVKAEEKS). Phosphoserine is present on residues Ser-353 and Ser-356. The segment covering 362-371 (VKKEPEDRQQ) has biased composition (basic and acidic residues). Residue Lys-363 forms a Glycyl lysine isopeptide (Lys-Gly) (interchain with G-Cter in SUMO2) linkage. Position 375 is a phosphoserine (Ser-375). Basic residues-rich tracts occupy residues 383 to 419 (DSKRSRNSRSASRSRSRTRSRSRSHTPRRHYNNRRSR), 439 to 453 (RRHHNHGSPHLKAKH), 461 to 477 (SNRHGHKRKKSRSRSQS), and 487 to 499 (KKHRHERGHHRDR). An RS region spans residues 391 to 433 (RSASRSRSRTRSRSRSHTPRRHYNNRRSRSGTYSSRSRSRSRS). At Ser-446 the chain carries Phosphoserine. A compositionally biased stretch (basic and acidic residues) spans 500–509 (RERSRSFERS). The segment covering 510–527 (HKGKHHGGSRSGHGRHRR) has biased composition (basic residues).

Belongs to the cyclin family. Cyclin L subfamily. In terms of assembly, interacts with POLR2A via its hyperphosphorylated C-terminal domain (CTD). Interacts with CDK11A, CDK11B, CDK12 and CDK13. May form a ternary complex with CDK11B and casein kinase II (CKII). Interacts with pre-mRNA-splicing factors, including at least SRSF1, SRSF2 AND SRSF7/SLU7. In terms of tissue distribution, ubiquitous with higher level in liver; expressed in striatal neurons.

Its subcellular location is the nucleus speckle. The protein resides in the nucleus. The protein localises to the nucleoplasm. In terms of biological role, involved in pre-mRNA splicing. Functions in association with cyclin-dependent kinases (CDKs). May play a role in the regulation of RNA polymerase II (pol II). Inhibited by the CDK-specific inhibitor CDKN1A/p21. In Rattus norvegicus (Rat), this protein is Cyclin-L1 (Ccnl1).